Reading from the N-terminus, the 374-residue chain is Probable tRNA pseudouridine synthase D (374 aa).

The active-site Nucleophile is the aspartate 81. The 200-residue stretch at 141–340 (VFPNYFDVQR…RKGFQKMYDL (200 aa)) folds into the TRUD domain.

Belongs to the pseudouridine synthase TruD family.

The enzyme catalyses uridine(13) in tRNA = pseudouridine(13) in tRNA. Its function is as follows. Could be responsible for synthesis of pseudouridine from uracil-13 in transfer RNAs. This Nanoarchaeum equitans (strain Kin4-M) protein is Probable tRNA pseudouridine synthase D.